A 429-amino-acid polypeptide reads, in one-letter code: Glutamate-1-semialdehyde 2,1-aminomutase (429 aa).

Lys267 is modified (N6-(pyridoxal phosphate)lysine).

This sequence belongs to the class-III pyridoxal-phosphate-dependent aminotransferase family. HemL subfamily. As to quaternary structure, homodimer. Pyridoxal 5'-phosphate is required as a cofactor.

It is found in the cytoplasm. The enzyme catalyses (S)-4-amino-5-oxopentanoate = 5-aminolevulinate. The protein operates within porphyrin-containing compound metabolism; protoporphyrin-IX biosynthesis; 5-aminolevulinate from L-glutamyl-tRNA(Glu): step 2/2. The chain is Glutamate-1-semialdehyde 2,1-aminomutase from Xanthomonas euvesicatoria pv. vesicatoria (strain 85-10) (Xanthomonas campestris pv. vesicatoria).